The sequence spans 453 residues: Pup--protein ligase (453 aa).

Glu-9 is a Mg(2+) binding site. Arg-53 contacts ATP. Residue Tyr-55 participates in Mg(2+) binding. The Proton acceptor role is filled by Asp-57. Glu-63 lines the Mg(2+) pocket. ATP is bound by residues Thr-66 and Trp-420.

The protein belongs to the Pup ligase/Pup deamidase family. Pup-conjugating enzyme subfamily.

The catalysed reaction is ATP + [prokaryotic ubiquitin-like protein]-L-glutamate + [protein]-L-lysine = ADP + phosphate + N(6)-([prokaryotic ubiquitin-like protein]-gamma-L-glutamyl)-[protein]-L-lysine.. Its pathway is protein degradation; proteasomal Pup-dependent pathway. It functions in the pathway protein modification; protein pupylation. Its function is as follows. Catalyzes the covalent attachment of the prokaryotic ubiquitin-like protein modifier Pup to the proteasomal substrate proteins, thereby targeting them for proteasomal degradation. This tagging system is termed pupylation. The ligation reaction involves the side-chain carboxylate of the C-terminal glutamate of Pup and the side-chain amino group of a substrate lysine. This is Pup--protein ligase from Streptomyces scabiei (strain 87.22).